Here is a 361-residue protein sequence, read N- to C-terminus: Polygalacturonase (361 aa).

The signal sequence occupies residues 1 to 18; sequence MISANSLLISTLCAFAIA. A disulfide bond links cysteine 27 and cysteine 43. PbH1 repeat units follow at residues 155 to 185, 186 to 207, 208 to 228, 237 to 258, and 266 to 288; these read CSDL…DVGS, SSNV…AVNS, GSTI…SVGS, VNGF…RIKT, and VTNV…VIEG. The Proton donor role is filled by aspartate 200. The cysteines at positions 202 and 218 are disulfide-linked. Histidine 222 is an active-site residue. N-linked (GlcNAc...) asparagine glycans are attached at residues asparagine 318 and asparagine 330. Residues cysteine 350 and cysteine 361 are joined by a disulfide bond.

It belongs to the glycosyl hydrolase 28 family.

It catalyses the reaction (1,4-alpha-D-galacturonosyl)n+m + H2O = (1,4-alpha-D-galacturonosyl)n + (1,4-alpha-D-galacturonosyl)m.. In Saccharomyces cerevisiae (strain ATCC 204508 / S288c) (Baker's yeast), this protein is Polygalacturonase (PGU1).